The primary structure comprises 391 residues: Phosphoglycerate kinase (391 aa).

Residues 21–23, R36, 59–62, R113, and R146 each bind substrate; these read DFN and HLGR. ATP is bound by residues K197, E319, and 345–348; that span reads GGDT.

Belongs to the phosphoglycerate kinase family. Monomer.

The protein localises to the cytoplasm. It carries out the reaction (2R)-3-phosphoglycerate + ATP = (2R)-3-phospho-glyceroyl phosphate + ADP. Its pathway is carbohydrate degradation; glycolysis; pyruvate from D-glyceraldehyde 3-phosphate: step 2/5. The chain is Phosphoglycerate kinase from Methylococcus capsulatus (strain ATCC 33009 / NCIMB 11132 / Bath).